The chain runs to 198 residues: Protein UNCMA_24250 (198 aa).

Positions E5 to E194 constitute an AMMECR1 domain.

The chain is Protein UNCMA_24250 from Methanocella arvoryzae (strain DSM 22066 / NBRC 105507 / MRE50).